The primary structure comprises 181 residues: MQPTHSVNCEPLKSLVRTVPDFPKPGILFYDITTLLKDRQGFAKLIDALAEHYIGKNIDLVLGIEARGFIFGPALAYRLNAGFVPVRKPRKLPARTVRVTYDLEYGSDTLEIHEDAIEPGQRIVLVDDLLATGGTMEATVKLVRQLGGEIAGLAFAVELDFLKGRERFPDLDVFSLLHYSE.

The protein belongs to the purine/pyrimidine phosphoribosyltransferase family. As to quaternary structure, homodimer.

It is found in the cytoplasm. It catalyses the reaction AMP + diphosphate = 5-phospho-alpha-D-ribose 1-diphosphate + adenine. Its pathway is purine metabolism; AMP biosynthesis via salvage pathway; AMP from adenine: step 1/1. Functionally, catalyzes a salvage reaction resulting in the formation of AMP, that is energically less costly than de novo synthesis. This is Adenine phosphoribosyltransferase from Acidobacterium capsulatum (strain ATCC 51196 / DSM 11244 / BCRC 80197 / JCM 7670 / NBRC 15755 / NCIMB 13165 / 161).